A 336-amino-acid chain; its full sequence is NEDD4 family-interacting protein 2 (336 aa).

Disordered regions lie at residues 1 to 24 (MARR…RGAP) and 37 to 156 (SAAA…SITV). Residues 1-231 (MARRRSQRVC…ADQLRVGNDG (231 aa)) are Cytoplasmic-facing. The segment covering 37 to 48 (SAAAAGATGSEE) has biased composition (low complexity). Residues 78-99 (EHGEDSLSRKPDPEPGRMDHHQ) are compositionally biased toward basic and acidic residues. The segment at 148 to 151 (PPPY) is interaction with NEDD4. Positions 148-151 (PPPY) match the PPxY motif 1 motif. A phosphotyrosine; by SRC mark is found at Tyr-151, Tyr-167, Tyr-171, and Tyr-177. Short sequence motifs (PPxY motif) lie at residues 174–177 (PPPY) and 184–186 (PTY). The chain crosses the membrane as a helical span at residues 232 to 252 (IFMLAFFMAFIFNWLGFCLSF). Topologically, residues 253 to 257 (CITNT) are extracellular. The chain crosses the membrane as a helical span at residues 258-278 (IAGRYGAICGFGLSLIKWILI). The Cytoplasmic portion of the chain corresponds to 279-287 (VRFSDYFTG). A helical membrane pass occupies residues 288-308 (YFNGQYWLWWIFLVLGLLLFF). At 309–336 (RGFVNYLKVRNMSESMAAAHRTRYFFLL) the chain is on the extracellular side.

As to quaternary structure, forms heterodimers with NDFIP1. Interacts with HECT domain-containing E3 ubiquitin-protein ligases, including NEDD4. Interacts with NEDD4L. Interacts with PTEN. When phosphorylated at Tyr-167, interacts with SRC and LYN SH2 domain. May thus act as a scaffold that recruits SRC to NDFIP1, enhancing NDFIP1 phosphorylation. Interacts with SLC11A2/DMT1. May interact with phosphorylated EGFR. Interacts with KCNH2. Post-translationally, ubiquitinated by NEDD4 and ITCH. Also ubiquitinated by NEDD4L. Ubiquitination by NEDD4 or NEDD4L does not affect turnover. In terms of processing, undergoes transient tyrosine-phosphorylation following EGF stimulation, most probably catalyzed by SRC. Phosphorylation on Tyr-151, Tyr-171 and Tyr-177 are dependent on the phosphorylation on Tyr-167. Also phosphorylated by LYN and FYN. In terms of tissue distribution, expressed in brain, lung, heart, skeletal muscle, kidney, liver and placenta.

It is found in the endosome membrane. The protein localises to the golgi apparatus membrane. Its subcellular location is the endosome. It localises to the multivesicular body membrane. Functionally, activates HECT domain-containing E3 ubiquitin-protein ligases, including ITCH, NEDD4, NEDD4L, SMURF2, WWP1 and WWP2, and consequently modulates the stability of their targets. As a result, may control many cellular processes. Recruits ITCH, NEDD4 and SMURF2 to endosomal membranes. Negatively regulates KCNH2 potassium channel activity by decreasing its cell-surface expression and interfering with channel maturation through recruitment of NEDD4L to the Golgi apparatus and multivesicular body where it mediates KCNH2 degradation. May modulate EGFR signaling. Together with NDFIP1, limits the cytokine signaling and expansion of effector Th2 T-cells by promoting degradation of JAK1, probably by ITCH- and NEDD4L-mediated ubiquitination. This chain is NEDD4 family-interacting protein 2 (NDFIP2), found in Homo sapiens (Human).